A 161-amino-acid polypeptide reads, in one-letter code: Large ribosomal subunit protein uL15 (161 aa).

The interval 1–44 is disordered; that stretch reads MKLSEIADNAGSRKKRMRVGRGIGSGKGKTAGRGGKGQTARSGV. The segment covering 21–37 has biased composition (gly residues); that stretch reads RGIGSGKGKTAGRGGKG.

This sequence belongs to the universal ribosomal protein uL15 family. As to quaternary structure, part of the 50S ribosomal subunit.

Functionally, binds to the 23S rRNA. The polypeptide is Large ribosomal subunit protein uL15 (Rhodopseudomonas palustris (strain BisA53)).